The primary structure comprises 597 residues: Lipoprotein LpqB (597 aa).

The signal sequence occupies residues 1–28 (MTPGRRSALLSRSVCGAIVLAVLVTVSG). Cys29 is lipidated: N-palmitoyl cysteine. Cys29 carries S-diacylglycerol cysteine lipidation. Residues 38 to 51 (PQAIGTINRDSPGS) are compositionally biased toward polar residues. The segment at 38-58 (PQAIGTINRDSPGSSVAAPAP) is disordered.

The protein belongs to the LpqB lipoprotein family.

The protein localises to the cell membrane. The chain is Lipoprotein LpqB from Rhodococcus jostii (strain RHA1).